We begin with the raw amino-acid sequence, 107 residues long: Replication initiation control protein YabA (107 aa).

Residues H81, C83, C97, and C100 each contribute to the Zn(2+) site.

This sequence belongs to the YabA family. In terms of assembly, homotetramer. Interacts with both DnaA and DnaN, acting as a bridge between these two proteins. Zn(2+) is required as a cofactor.

The protein localises to the cytoplasm. It localises to the nucleoid. Its function is as follows. Involved in control of chromosome replication initiation. Inhibits the cooperative binding of DnaA to the oriC region, thus negatively regulating initiation of chromosome replication. Inhibits the ability of DnaA-ATP to form a helix on DNA; does not disassemble preformed DnaA-DNA helices. Decreases the residence time of DnaA on the chromosome at its binding sites (oriC, replication forks and promoter-binding sites). Tethers DnaA to the replication machinery via the DNA polymerase beta sliding clamp subunit (dnaN). Associates with oriC and other DnaA targets on the chromosome in a DnaA-dependent manner. The sequence is that of Replication initiation control protein YabA from Streptococcus pyogenes serotype M1.